Reading from the N-terminus, the 149-residue chain is Transcriptional repressor NrdR (149 aa).

A zinc finger spans residues 3–34; sequence CPFCDTEETKVIDSRLVSDGYQVRRRRECGHC. Positions 49–139 constitute an ATP-cone domain; it reads PKIIKTDGTR…VYLSFDDIDQ (91 aa).

Belongs to the NrdR family. Zn(2+) is required as a cofactor.

Functionally, negatively regulates transcription of bacterial ribonucleotide reductase nrd genes and operons by binding to NrdR-boxes. This Haemophilus influenzae (strain PittEE) protein is Transcriptional repressor NrdR.